We begin with the raw amino-acid sequence, 116 residues long: FK506-binding protein 1 (116 aa).

The PPIase FKBP-type domain occupies 19-116 (GDKVSIHYTG…IFEVELLKIN (98 aa)).

Belongs to the FKBP-type PPIase family. FKBP1 subfamily.

The protein resides in the cytoplasm. The enzyme catalyses [protein]-peptidylproline (omega=180) = [protein]-peptidylproline (omega=0). Inhibited by both FK506 and rapamycin. Functionally, PPIases accelerate the folding of proteins. It catalyzes the cis-trans isomerization of proline imidic peptide bonds in oligopeptides. The polypeptide is FK506-binding protein 1 (fpr1) (Aspergillus oryzae (strain ATCC 42149 / RIB 40) (Yellow koji mold)).